The sequence spans 805 residues: Angiotensin-converting enzyme 2 (805 aa).

An N-terminal signal peptide occupies residues 1–17 (MSSSSWLLLSLVAVTTA). The Extracellular portion of the chain corresponds to 18-740 (QSLTEENAKT…LEPPYQPPVT (723 aa)). The region spanning 19–607 (SLTEENAKTF…QNRNSFVGWN (589 aa)) is the Peptidase M2 domain. A glycan (N-linked (GlcNAc...) asparagine) is linked at Asn53. Cys133 and Cys141 are disulfide-bonded. Arg169 lines the chloride pocket. Substrate is bound by residues Arg273 and 345 to 346 (HP). The cysteines at positions 344 and 361 are disulfide-linked. Zn(2+) is bound at residue His374. Glu375 acts as the Proton acceptor in catalysis. 2 residues coordinate Zn(2+): His378 and Glu402. Chloride-binding residues include Trp477 and Lys481. The active-site Proton donor is the His505. Substrate is bound at residue Tyr515. A disulfide bond links Cys530 and Cys542. N-linked (GlcNAc...) asparagine glycosylation is found at Asn536 and Asn546. Residues 614 to 805 (ADQSIKVRIS…QNSDDAQTSF (192 aa)) enclose the Collectrin-like domain. The interval 652–659 (RKYFSIIK) is essential for cleavage by ADAM17. Residues Asn660 and Asn690 are each glycosylated (N-linked (GlcNAc...) asparagine). The tract at residues 697-716 (RSEVEDAIRMSRGRINDVFG) is essential for cleavage by TMPRSS11D and TMPRSS2. A helical transmembrane segment spans residues 741–761 (IWLIIFGVVMALVVVGIIILI). Topologically, residues 762–805 (VTGIKGRKKKNETKREENPYDSMDIGKGESNAGFQNSDDAQTSF) are cytoplasmic. The segment at 771-805 (KNETKREENPYDSMDIGKGESNAGFQNSDDAQTSF) is disordered. The LIR motif lies at 778–786 (ENPYDSMDI). At Tyr781 the chain carries Phosphotyrosine. The Endocytic sorting signal signature appears at 781–784 (YDSM). An SH2-binding motif is present at residues 781–785 (YDSMD). Residue Ser783 is modified to Phosphoserine. A Glycyl lysine isopeptide (Lys-Gly) (interchain with G-Cter in ubiquitin) cross-link involves residue Lys788. The PTB motif lies at 792 to 795 (NAGF). A compositionally biased stretch (polar residues) spans 793–805 (AGFQNSDDAQTSF). A PDZ-binding motif is present at residues 803 to 805 (TSF).

The protein belongs to the peptidase M2 family. Homodimer. Interacts with the catalytically active form of TMPRSS2. Interacts with SLC6A19; this interaction is essential for expression and function of SLC6A19 in intestine. Interacts with ITGA5:ITGB1. Probably interacts (via endocytic sorting signal motif) with AP2M1; the interaction is inhibited by phosphorylation of Tyr-781. Interacts (via PDZ-binding motif) with NHERF1 (via PDZ domains); the interaction may enhance ACE2 membrane residence. In terms of assembly, (Microbial infection) Weakly interacts with SARS-CoV S protein. The cofactor is Zn(2+). Requires chloride as cofactor. Proteolytic cleavage by ADAM17 generates a secreted form. Also cleaved by serine proteases: TMPRSS2, TMPRSS11D and HPN/TMPRSS1. Post-translationally, phosphorylated. Phosphorylation at Tyr-781 probably inhibits interaction with AP2M1 and enables interactions with proteins containing SH2 domains. In terms of processing, ubiquitinated. Ubiquitinated on Lys-788 via 'Lys-48'-linked ubiquitin. 'Lys-48'-linked deubiquitinated by USP50 on the Lys-788; leading to its stabilization. As to expression, expressed in heart, kidney and forebrain (at protein level). Expressed in the small intestine, with expression in the intestinal brush border (at protein level). Ubiquitously expressed, with highest levels in ileum, kidney and lung. In lung, expressed on vascular endothelial and airway epithelial cells. Also expressed at high levels in lung secretory club and goblet cells as well as in alveolar type 2 cells.

The protein resides in the secreted. Its subcellular location is the cell membrane. The protein localises to the cytoplasm. It localises to the cell projection. It is found in the cilium. The protein resides in the apical cell membrane. It carries out the reaction angiotensin II + H2O = angiotensin-(1-7) + L-phenylalanine. It catalyses the reaction angiotensin I + H2O = angiotensin-(1-9) + L-leucine. The enzyme catalyses bradykinin(1-8) + H2O = bradykinin(1-7) + L-phenylalanine. The catalysed reaction is neurotensin + H2O = neurotensin-(1-12) + L-leucine. It carries out the reaction kinetensin + H2O = kinetensin-(1-8) + L-leucine. It catalyses the reaction dynorphin A-(1-13) + H2O = dynorphin A-(1-12) + L-lysine. The enzyme catalyses apelin-13 + H2O = apelin-12 + L-phenylalanine. The catalysed reaction is [Pyr1]apelin-13 + H2O = [Pyr1]apelin-12 + L-phenylalanine. It carries out the reaction apelin-17 + H2O = apelin-16 + L-phenylalanine. Functionally, essential counter-regulatory carboxypeptidase of the renin-angiotensin hormone system that is a critical regulator of blood volume, systemic vascular resistance, and thus cardiovascular homeostasis. Converts angiotensin I to angiotensin 1-9, a nine-amino acid peptide with anti-hypertrophic effects in cardiomyocytes, and angiotensin II to angiotensin 1-7, which then acts as a beneficial vasodilator and anti-proliferation agent, counterbalancing the actions of the vasoconstrictor angiotensin II. Also removes the C-terminal residue from three other vasoactive peptides, neurotensin, kinetensin, and des-Arg bradykinin, but is not active on bradykinin. Also cleaves other biological peptides, such as apelins, casomorphins and dynorphin A. By cleavage of angiotensin II, may be an important regulator of heart function. By cleavage of angiotensin II, may also have a protective role in acute lung injury. Plays an important role in amino acid transport by acting as binding partner of amino acid transporter SLC6A19, regulating its trafficking on the cell surface and its activity. This is Angiotensin-converting enzyme 2 (Ace2) from Mus musculus (Mouse).